Consider the following 231-residue polypeptide: uncharacterized protein (231 aa).

The signal sequence occupies residues Met-1–Ser-25. Topologically, residues Thr-26–Thr-200 are extracellular. Positions Ser-39–Gly-64 are disordered. The chain crosses the membrane as a helical span at residues Leu-201 to Ala-225. Residues Pro-226 to Ser-231 lie on the Cytoplasmic side of the membrane.

The protein resides in the membrane. This is an uncharacterized protein from Homo sapiens (Human).